A 180-amino-acid polypeptide reads, in one-letter code: ADP-ribosylation factor 1 (180 aa).

A lipid anchor (N-myristoyl glycine) is attached at glycine 2. GTP-binding positions include 24–31 (GLDAAGKT), 67–71 (DVGGQ), and 126–129 (NKQD).

This sequence belongs to the small GTPase superfamily. Arf family.

It is found in the golgi apparatus. It catalyses the reaction GTP + H2O = GDP + phosphate + H(+). In terms of biological role, GTP-binding protein involved in protein trafficking; may modulate vesicle budding and uncoating within the Golgi apparatus. This chain is ADP-ribosylation factor 1 (arf1), found in Schizosaccharomyces pombe (strain 972 / ATCC 24843) (Fission yeast).